The chain runs to 313 residues: MKWSEFSIHTTQEAVEPVCNILHEAGASGVVIEDPKDLVKEWGVHYGEIYQLNPDDYPEEGVMIKAYFPVNSFLGETIEEIKEAINGLLLYDIDLGHNKIQLVEVLEEEWATAWKKYYKPVKVSNTITIVPTWEEYEAHEDEMIIELDPGMAFGTGTHPTTVLCIQALENVIQGGESVIDVGTGSGVLSIAAAKLGASEVLGLDLDEVAVKSAQMNVKLNKVHRQVMVRQNHLLEGITGTRDVIVANILAEVIIRFVADAKAVLKPGGTFIVSGIIKRKKNDVKDALVTNGFQIEETVELEDWVAIIAKNGHE.

S-adenosyl-L-methionine-binding residues include T161, G182, D204, and N247.

The protein belongs to the methyltransferase superfamily. PrmA family.

It localises to the cytoplasm. It catalyses the reaction L-lysyl-[protein] + 3 S-adenosyl-L-methionine = N(6),N(6),N(6)-trimethyl-L-lysyl-[protein] + 3 S-adenosyl-L-homocysteine + 3 H(+). In terms of biological role, methylates ribosomal protein L11. The protein is Ribosomal protein L11 methyltransferase of Halalkalibacterium halodurans (strain ATCC BAA-125 / DSM 18197 / FERM 7344 / JCM 9153 / C-125) (Bacillus halodurans).